The primary structure comprises 426 residues: Trigger factor (426 aa).

The region spanning 165 to 239 (GDVYKLNEAG…ISEIKRLELP (75 aa)) is the PPIase FKBP-type domain.

Belongs to the FKBP-type PPIase family. Tig subfamily.

Its subcellular location is the cytoplasm. The enzyme catalyses [protein]-peptidylproline (omega=180) = [protein]-peptidylproline (omega=0). Its function is as follows. Involved in protein export. Acts as a chaperone by maintaining the newly synthesized protein in an open conformation. Functions as a peptidyl-prolyl cis-trans isomerase. In Pelodictyon phaeoclathratiforme (strain DSM 5477 / BU-1), this protein is Trigger factor.